The sequence spans 199 residues: Glycerol-3-phosphate acyltransferase (199 aa).

The next 5 membrane-spanning stretches (helical) occupy residues 5 to 25 (VLTIVIIVGAYLAGSVSSAVL), 56 to 76 (SAALVLFCDMLKGAAPAYLAF), 83 to 103 (IALGVIAIAACLGHIFPIFFG), 118 to 138 (APIGHDLALCLLASWIVLVLV), and 141 to 161 (YSSFAAICTALLAPVYTWWLD).

Belongs to the PlsY family. As to quaternary structure, probably interacts with PlsX.

It localises to the cell inner membrane. It catalyses the reaction an acyl phosphate + sn-glycerol 3-phosphate = a 1-acyl-sn-glycero-3-phosphate + phosphate. The protein operates within lipid metabolism; phospholipid metabolism. Catalyzes the transfer of an acyl group from acyl-phosphate (acyl-PO(4)) to glycerol-3-phosphate (G3P) to form lysophosphatidic acid (LPA). This enzyme utilizes acyl-phosphate as fatty acyl donor, but not acyl-CoA or acyl-ACP. This Shewanella halifaxensis (strain HAW-EB4) protein is Glycerol-3-phosphate acyltransferase.